Reading from the N-terminus, the 1374-residue chain is DNA-directed RNA polymerase subunit beta (1374 aa).

It belongs to the RNA polymerase beta chain family. The RNAP catalytic core consists of 2 alpha, 1 beta, 1 beta' and 1 omega subunit. When a sigma factor is associated with the core the holoenzyme is formed, which can initiate transcription.

The enzyme catalyses RNA(n) + a ribonucleoside 5'-triphosphate = RNA(n+1) + diphosphate. Its function is as follows. DNA-dependent RNA polymerase catalyzes the transcription of DNA into RNA using the four ribonucleoside triphosphates as substrates. The chain is DNA-directed RNA polymerase subunit beta from Methylobacterium radiotolerans (strain ATCC 27329 / DSM 1819 / JCM 2831 / NBRC 15690 / NCIMB 10815 / 0-1).